The chain runs to 51 residues: Insulin (51 aa).

3 cysteine pairs are disulfide-bonded: C7–C37, C19–C50, and C36–C41.

It belongs to the insulin family. As to quaternary structure, heterodimer of a B chain and an A chain linked by two disulfide bonds.

It is found in the secreted. Its function is as follows. Insulin decreases blood glucose concentration. It increases cell permeability to monosaccharides, amino acids and fatty acids. It accelerates glycolysis, the pentose phosphate cycle, and glycogen synthesis in liver. In Elephas maximus (Indian elephant), this protein is Insulin (INS).